The primary structure comprises 560 residues: Exonuclease subunit 2 (560 aa).

36-43 (GRNGGGKS) serves as a coordination point for ATP.

The protein to phage T5 protein D13 and to yeast RAD52. In terms of assembly, consists of two subunits: gp46 and gp47.

Its function is as follows. Exonuclease that plays a role in viral genome replication, DNA recombination, and host DNA degradation. The sequence is that of Exonuclease subunit 2 (46) from Enterobacteria phage T4 (Bacteriophage T4).